The primary structure comprises 310 residues: MSEMDAVNKIRELRDAFGSFMTGVTVVTTCKDDGTPLGFTANSFASVSLDPALLLVSIAKTSSNYHNFADASHFAINILAEEQKDVSNIFARPSDDRFAQLVWAKSEYQNPLIDGVSAWFDCTTYQVVDAGDHAILIGKVENFTSAGFAGLGYYRGAYFTPAKSSTDVISSMKVMMMALIGHENKILLEQTADHKWALPHLMVEKDGAEKALEKIFATYQPEASPSFIYSVYDDVTTQQQYIAFLCNTPVPTAHKGQFVDLNDLEKLTFTDSALQSMLMRYRKENYLKTYGVYYGNHTSGTVRQIVKEGV.

Residues 40-43 (TANS), 57-63 (SIAKTSS), 90-91 (FA), and Arg-97 each bind FMN.

The protein belongs to the non-flavoprotein flavin reductase family. As to quaternary structure, homodimer. The trigonelline monooxygenase is composed of a reductase component TgnA and an oxygenase component TgnB.

It catalyses the reaction a reduced flavin + NAD(+) = an oxidized flavin + NADH + 2 H(+). It carries out the reaction FADH2 + NAD(+) = FAD + NADH + 2 H(+). The enzyme catalyses FMNH2 + NAD(+) = FMN + NADH + 2 H(+). Maximal reductase activity is achieved only upon trigonelline (TG) binding to the reductase component before interaction with NADH. It seems that TgnA undergoes an allosteric transition upon trigonelline (TG) binding accounting for the positive cooperativity toward NADH oxidation. Its function is as follows. Involved in the degradation of the pyridine ring of trigonelline (TG; N-methylnicotinate) into succinate and methylamine as carbon and nitrogen sources, respectively. TgnA catalyzes the reduction of flavin (FMN or FAD) by NADH and supplies the reduced flavin to the oxygenase component TgnB. The sequence is that of Flavin-dependent trigonelline monooxygenase, reductase component from Acinetobacter baylyi (strain ATCC 33305 / BD413 / ADP1).